Consider the following 62-residue polypeptide: Calmodulin regulator protein PCP4 (62 aa).

The interval 1 to 39 (MSERQGAGATNGKDKTSGENDGQKKVQEEFDIDMDAPET) is disordered. The span at 12–28 (GKDKTSGENDGQKKVQE) shows a compositional bias: basic and acidic residues. The segment at 28-40 (EEFDIDMDAPETE) is acidic; binds calcium and is required for modulating the calcium-binding kinetics of calmodulin. In terms of domain architecture, IQ spans 39-62 (TERAAVAIQSQFRKFQKKKAGSQS).

It belongs to the PCP4 family. In terms of assembly, binds to both calcium-free and calcium-bound calmodulin. The affinity for the calcium-bound form is 50-fold greater.

Functionally, functions as a modulator of calcium-binding by calmodulin. Thereby, regulates calmodulin activity and the different processes it controls. For instance, may play a role in neuronal differentiation through activation of calmodulin-dependent kinase signaling pathways. In Homo sapiens (Human), this protein is Calmodulin regulator protein PCP4.